A 512-amino-acid chain; its full sequence is Bestrophin-2 (512 aa).

The Cytoplasmic segment spans residues 1–31 (MTVTYTARVAKARFGGFSKLLLLWRGSIYKL). Alanine 10 provides a ligand contact to Ca(2+). The chain crosses the membrane as a helical span at residues 32–51 (LWRELLCFLGLFMALSAAYR). At 52-60 (FVLTEEQKR) the chain is on the extracellular side. The helical transmembrane segment at 61–82 (YFEKLVLYCDRYASLIPVSFVL) threads the bilayer. The Cytoplasmic portion of the chain corresponds to 83-238 (GFYVTLVVHR…WISVPLVYTQ (156 aa)). A helical membrane pass occupies residues 239–255 (VVTIAVYSYFLACLIGR). The Extracellular segment spans residues 256–274 (QFLDPAQGYKDHDLDLCVP). A helical transmembrane segment spans residues 275–288 (IFTLLQFFFYAGWL). Topologically, residues 289–512 (KVAEQLINPF…PIGEEEESLA (224 aa)) are cytoplasmic. Ca(2+)-binding residues include glutamine 293, asparagine 296, aspartate 301, and aspartate 304. A disordered region spans residues 453-512 (VDLGQPEPESEPITGPESPALVPAPRAPSEPLTVVPLSGTRGPAPPWLPSPIGEEEESLA).

Belongs to the anion channel-forming bestrophin (TC 1.A.46) family. Calcium-sensitive chloride channel subfamily. Pentamer. Interacts with GLUL; this interaction tethers a fraction of GLUL to the membrane, causing a decrease of cytosolic glutamine synthase (GS) activity and inhibits the chloride channel activity of BEST2 by affecting the gating at the aperture in the absence of intracellular glutamate.

It localises to the cell membrane. Its subcellular location is the basolateral cell membrane. It catalyses the reaction chloride(in) = chloride(out). The enzyme catalyses iodide(out) = iodide(in). It carries out the reaction hydrogencarbonate(in) = hydrogencarbonate(out). The catalysed reaction is L-glutamate(out) = L-glutamate(in). It catalyses the reaction L-glutamine(out) = L-glutamine(in). Its activity is regulated as follows. Chloride channel activity is allosterically inhibited by GLUL/glutamine synthase (GS) which affects the gating at the aperture in the absence of intracellular glutamate. Inhibitory effect of GLUL is relieved upon increasing of intracellular level of L-glutamate. Functionally, ligand-gated anion channel that allows the movement of anions across cell membranes when activated by calcium (Ca2+). Transports a large specter of anions, namely mediates the movement of chloride, L-glutamate and iodide. Calcium-binding triggers the dilation of the aperture, but calcium-dependent gating is only effective when the size of the passing anion is bigger than the closed aperture. Mediates the calcium-activated hydrogencarbonate movement and participates in colonic hydrogencarbonate secretion concomitant with mucin secretion. In non-pigmented epithelium (NPE), mediates the efflux of intracellular L-glutamate; binding of intracellular L-glutamate activates and open both the neck and the aperture of the channel, leading to L-glutamate exit promoting chloride influx movement from the extracellular side in trans. Also exhibits a directional permeability for intracellular glutamine, in a similar manner as for L-glutamate. This chain is Bestrophin-2, found in Bos taurus (Bovine).